Here is a 430-residue protein sequence, read N- to C-terminus: Putative golgin subfamily A member 8D (430 aa).

Residues 2 to 217 (EWKLEQSMRE…LTAQLSLMAL (216 aa)) are a coiled coil. Disordered stretches follow at residues 138–158 (LREQ…QEER), 217–239 (LPGE…RPMP), 290–331 (PITK…GVAA), and 382–406 (PVQG…QDHQ). A compositionally biased stretch (basic and acidic residues) spans 222-235 (HGGEHLDSEGEEAP). Residues 303-316 (PGGGHHQAGPGQGG) show a composition bias toward gly residues.

Belongs to the GOLGA8 family.

In Homo sapiens (Human), this protein is Putative golgin subfamily A member 8D (GOLGA8DP).